Consider the following 1311-residue polypeptide: Mitogen-activated protein kinase kinase kinase 19 (1311 aa).

Disordered regions lie at residues 85-119, 250-274, 330-363, 396-472, 486-508, 576-607, and 734-767; these read PDPL…SPPD, PLSQ…PVEH, SVKE…YLSS, MTPA…NPEM, EGTS…PAQN, HRPH…KQAF, and SKDK…FLSS. A compositionally biased stretch (polar residues) spans 250-261; sequence PLSQSAEFSSSK. 3 stretches are compositionally biased toward basic and acidic residues: residues 262-274, 330-345, and 450-464; these read NHQE…PVEH, SVKE…RDSG, and LEGH…KIPM. Residues 734–748 show a composition bias toward basic and acidic residues; it reads SKDKGCKDMGGHTED. Residues 1044 to 1307 enclose the Protein kinase domain; the sequence is WTKGEILGRG…ALQLLKHSFL (264 aa). Residues 1050 to 1058 and lysine 1072 each bind ATP; that span reads LGRGAYGTV. Aspartate 1169 serves as the catalytic Proton acceptor.

This sequence belongs to the protein kinase superfamily. STE Ser/Thr protein kinase family. STE20 subfamily.

It carries out the reaction L-seryl-[protein] + ATP = O-phospho-L-seryl-[protein] + ADP + H(+). It catalyses the reaction L-threonyl-[protein] + ATP = O-phospho-L-threonyl-[protein] + ADP + H(+). The chain is Mitogen-activated protein kinase kinase kinase 19 (Map3k19) from Mus musculus (Mouse).